The chain runs to 316 residues: Glutathione synthetase (316 aa).

The region spanning 124-310 (EKLFTAWFPE…ITGKLMDAIE (187 aa)) is the ATP-grasp domain. ATP is bound at residue 150 to 207 (FREEHGDVILKPLDGMGGASIFRVKENDPNVSVIIETLTNHGQNYAMAQTFVPDISNG). Mg(2+)-binding residues include E281 and N283.

Belongs to the prokaryotic GSH synthase family. The cofactor is Mg(2+). It depends on Mn(2+) as a cofactor.

It carries out the reaction gamma-L-glutamyl-L-cysteine + glycine + ATP = glutathione + ADP + phosphate + H(+). The protein operates within sulfur metabolism; glutathione biosynthesis; glutathione from L-cysteine and L-glutamate: step 2/2. The sequence is that of Glutathione synthetase from Vibrio parahaemolyticus serotype O3:K6 (strain RIMD 2210633).